The primary structure comprises 302 residues: Homoserine O-acetyltransferase (302 aa).

The active-site Acyl-thioester intermediate is the Cys142. The substrate site is built by Lys163 and Ser192. His235 serves as the catalytic Proton acceptor. Glu237 is a catalytic residue. A substrate-binding site is contributed by Arg249.

The protein belongs to the MetA family.

It is found in the cytoplasm. It carries out the reaction L-homoserine + acetyl-CoA = O-acetyl-L-homoserine + CoA. It participates in amino-acid biosynthesis; L-methionine biosynthesis via de novo pathway; O-acetyl-L-homoserine from L-homoserine: step 1/1. Transfers an acetyl group from acetyl-CoA to L-homoserine, forming acetyl-L-homoserine. The protein is Homoserine O-acetyltransferase of Geobacillus kaustophilus (strain HTA426).